We begin with the raw amino-acid sequence, 659 residues long: MDDERRVLCPENRGLAAYVLQKKQEYAEKPKGLSENLERTFVKGYRSVCDAKDPINTLKDLSQIKGFGKWMVKLMKGYFDTAVESSEQEDLPDNRAGKKANGKKRYIPQRNSVGYALLITLHRRTTNGKEFMRKQELIDAADANGLSHAPVGPEKGKGKAGLGHSKREWYSGWSCMTTLIQKGLVVKSSNPAKYMLTVEGREVANECILRSGLPDSVDILSVDEMDPTPQAKKTPNQNPTCSFTMREELPYVDPRCRAQSAIPSDILEKFTPFGYSKEQVVAAFREVSDGSGDKDPSTLWLSVMCHLRQAEVYNSCPDSRNSKKDSSGPFKSQIRQVDLEGSRAKKFRSCNDGSTLNPCSSGSSHAVKACSSSLASDGTKGITNIPRLPPLQFGETFEEAYDVILILDDREKFATKGSRSRNIVENICSEFNIKIEVRRLPVGDCIWIARHKYLETEYVLDFIAERKNVDDMRSSIRDNRYRDQKLRLQRSGFKKLIYILEGDPNHSDAAESIKTACFTTEILEGFDVLRTHGLGETLRKYGYLTKSIYQYYKLRVNDNDQSKGAASCPSFDSFVKRCQDLDKMTISDVFAIQLMQVPQVTEEIAIAVLDMYPTLLSLASAYSHLEADVSAQEEMLRNRSNNVICASASKNIFKLVWGE.

The short motif at 59 to 78 (KDLSQIKGFGKWMVKLMKGY) is the Helix-hairpin-helix motif 1 element. The region spanning 404 to 503 (ILILDDREKF…KKLIYILEGD (100 aa)) is the ERCC4 domain. Residues 585–622 (TISDVFAIQLMQVPQVTEEIAIAVLDMYPTLLSLASAY) carry the Helix-hairpin-helix motif 2 motif.

Belongs to the XPF family. In terms of assembly, forms a heterodimer with EME1A or EME1B. Requires Mg(2+) as cofactor. It depends on Ca(2+) as a cofactor. Ubiquitous but preferentially expressed in young flowers buds, notably in anthers.

Its subcellular location is the nucleus. The protein resides in the nucleolus. In terms of biological role, interacts with EME1 to form a DNA structure-specific endonuclease with substrate preference for branched DNA structures with a 5'-end at the branch nick. Typical substrates include 3'-flap structures, D-loops, replication forks, nicked Holliday junctions and also intact Holliday junctions with a reduced efficiency. May be required in mitosis for the processing of stalled or collapsed replication fork intermediates. Plays a role in DNA repair and in genotoxic stress-induced homologous recombination (HR) in somatic cells. Mediates a subset of meiotic recombination events that are insensitive to crossover interference. Together with SEND1, essential for the resolution of toxic replication structures to ensure genome stability, and to maintain telomere integrity and replication. This Arabidopsis thaliana (Mouse-ear cress) protein is Crossover junction endonuclease MUS81.